Reading from the N-terminus, the 687-residue chain is Adhesion G-protein coupled receptor G1 (687 aa).

Residues 1 to 25 form the signal peptide; sequence MAVQVLRQMVYFLLSLFSLVQGAHS. 26 to 33 is a heparin binding site; that stretch reads GSPREDFR. Residues 26–402 lie on the Extracellular side of the membrane; that stretch reads GSPREDFRFC…TEVEATHKHY (377 aa). 2 cysteine pairs are disulfide-bonded: cysteine 35–cysteine 91 and cysteine 121–cysteine 177. Residues asparagine 39, asparagine 148, and asparagine 171 are each glycosylated (N-linked (GlcNAc...) asparagine). 190 to 200 is a heparin binding site; the sequence is LQHPQKAAKRP. One can recognise a GAIN-B domain in the interval 224 to 395; it reads DTLSFEEDRV…AVLMVSSTEV (172 aa). N-linked (GlcNAc...) asparagine glycosylation is found at asparagine 234, asparagine 303, asparagine 324, and asparagine 341. 2 cysteine pairs are disulfide-bonded: cysteine 346–cysteine 377 and cysteine 366–cysteine 379. Residues 346-395 are GPS; it reads CVFWVEDPASSSTGSWSSAGCETVSRDTQTSCLCNHLTYFAVLMVSSTEV. The tract at residues 384-397 is stachel; it reads YFAVLMVSSTEVEA. The chain crosses the membrane as a helical span at residues 403-423; sequence LTLLSYVGCVISALACVFTIA. The Cytoplasmic portion of the chain corresponds to 424-442; that stretch reads AYLCSRRKSRDYTIKVHMN. Residues 443-463 traverse the membrane as a helical segment; the sequence is LLSAVFLLDVSFLLSEPVALT. Topologically, residues 464–471 are extracellular; the sequence is GSEAACRT. A helical transmembrane segment spans residues 472-492; that stretch reads SAMFLHFSLLACLSWMGLEGY. Topologically, residues 493–512 are cytoplasmic; that stretch reads NLYRLVVEVFGTYVPGYLLK. Residues 513-533 traverse the membrane as a helical segment; it reads LSIVGWGFPVFLVTLVALVDV. The Extracellular portion of the chain corresponds to 534–570; sequence NNYGPIILAVRRTPERVTYPSMCWIRDSLVSYVTNLG. The helical transmembrane segment at 571 to 591 threads the bilayer; the sequence is LFSLVFLFNLAMLATMVVQIL. The Cytoplasmic segment spans residues 592–603; the sequence is RLRPHSQNWPHV. Residues 604–624 traverse the membrane as a helical segment; the sequence is LTLLGLSLVLGLPWALVFFSF. Residues 625-630 are Extracellular-facing; the sequence is ASGTFQ. A helical transmembrane segment spans residues 631–651; the sequence is LVILYLFSIITSFQGFLIFLW. At 652–687 the chain is on the cytoplasmic side; that stretch reads YWSMRFQAQGGPSPLKNNSDSAKLPISSGSTSSSRI. Positions 664-687 are disordered; it reads SPLKNNSDSAKLPISSGSTSSSRI. Positions 678–687 are enriched in low complexity; it reads SSGSTSSSRI.

The protein belongs to the G-protein coupled receptor 2 family. LN-TM7 subfamily. In terms of assembly, heterodimer of 2 chains generated by proteolytic processing; the large extracellular N-terminal fragment (ADGRG1 NT) and the membrane-bound C-terminal fragment (ADGRG1-CT) predominantly remain associated and non-covalently linked. ADGRG1 NT self-associates in a trans-trans manner; the homophilic interaction enhances receptor signaling. Interacts with TGM2. Interacts with heparin; leading to the reduction of ADGRG1 shedding. Interacts with COL3A1. Part of a GPCR-tetraspanin complex at least consisting of ADGRG1, CD81, eventually CD9, and GNA11 in which CD81 is enhancing the association of ADGRG1 with GNA11. Post-translationally, autoproteolytically cleaved into 2 fragments; the large extracellular N-terminal fragment and the membroune-bound C-terminal fragment predominantly remain associated and non-covalently linked. N-glycosylated. The secreted ADGRG1 N-terminal fragment is heavily glycosylated. In terms of processing, ubiquitinated. Undergoes polyubiquitination upon activation. Expressed in neural progenitor cells in fetal forbrain. Expressed in migrating neurons. Expressed in radial glial endfeet (at protein level). Expressed in peritubular myoid cells, Sertoli cells, and germ cells of the testis.

The protein resides in the cell membrane. It localises to the secreted. The protein localises to the membrane raft. Forms a heterodimer of 2 chains generated by proteolytic processing that remain associated through non-covalent interactions mediated by the GAIN-B domain. In the inactivated receptor, the Stachel sequence (also named stalk) is embedded in the GAIN-B domain, where it adopts a beta-strand conformation. On activation, the Stachel moves into the 7 transmembrane region and adopts a twisted hook-shaped configuration that forms contacts within the receptor, leading to coupling of a G-alpha protein, which activates signaling. The cleaved GAIN-B and N-terminal domains can then dissociate from the rest of the receptor. Activated by the small-molecule agonist, 3-alpha-acetoxydihydrodeoxygedunin (3-alpha-DOG). Its function is as follows. Adhesion G-protein coupled receptor (aGPCR) for steroid hormone 17alpha-hydroxypregnenolone (17-OH), which is involved in cell adhesion and cell-cell interactions. Ligand binding causes a conformation change that triggers signaling via guanine nucleotide-binding proteins (G proteins) and modulates the activity of downstream effectors, such as RhoA pathway. ADGRG1 is coupled to G(12) and/or G(13) G proteins (GNA12 and GNA13, respectively) and mediates the activation Rho small GTPases. Acts as a potent suppressor of ferroptosis: binding to 17-OH-binding initiates signaling that down-regulates CD36 and alleviates ferroptosis-induced liver injury. Ligand-binding also induces cell adhesion activity via association with proteins such as collagen III/COL3A1 and TGM2. Mediates cell matrix adhesion in developing neurons and hematopoietic stem cells. Involved in cortical development, specifically in maintenance of the pial basement membrane integrity and in cortical lamination: association with COL3A1 in the developing brain inhibits neuronal migration via activation of the RhoA pathway. Together with TGM2, acts as a regulator of myelination and myelin repair in oligodendrocyte precursor cells. Acts as a hemostatic sensor of shear force: G protein-coupled receptor signaling is activated in response to shear force in platelets, promoting G(13) G protein signaling, and platelet shape change and aggregation in a COL3A1-dependent manner. Acts as an inhibitor of VEGFA production thereby inhibiting angiogenesis through a signaling pathway mediated by PRKCA. Plays a role in the maintenance of hematopoietic stem cells in bone marrow niche. Plays an essential role in testis development. In terms of biological role, adhesion G-protein coupled receptor (aGPCR) for phosphatidylserine, which is involved in microglia-mediated synapse pruning during development. Required to maintain appropriate synaptic numbers in several brain regions in a time- and circuit-dependent fashion: phosphatidylserine-binding acts as a 'eat-me' signal for apoptotic cells, leading to microglial engulfment of phosphatidylserine-positive synapses. The sequence is that of Adhesion G-protein coupled receptor G1 from Mus musculus (Mouse).